We begin with the raw amino-acid sequence, 189 residues long: Large ribosomal subunit protein bL9 (189 aa).

Belongs to the bacterial ribosomal protein bL9 family.

Functionally, binds to the 23S rRNA. The sequence is that of Large ribosomal subunit protein bL9 from Cereibacter sphaeroides (strain ATCC 17023 / DSM 158 / JCM 6121 / CCUG 31486 / LMG 2827 / NBRC 12203 / NCIMB 8253 / ATH 2.4.1.) (Rhodobacter sphaeroides).